A 332-amino-acid polypeptide reads, in one-letter code: Adenosine receptor A2b (332 aa).

Residues 1-8 lie on the Extracellular side of the membrane; it reads MQLETQDA. Residues 9–33 traverse the membrane as a helical segment; it reads LYVALELVIAALAVAGNVLVCAAVG. The Cytoplasmic portion of the chain corresponds to 34–43; sequence ASSALQTPTN. Residues 44-67 form a helical membrane-spanning segment; it reads YFLVSLATADVAVGLFAIPFAITI. At 68 to 78 the chain is on the extracellular side; it reads SLGFCTDFHGC. Cys78 and Cys171 are oxidised to a cystine. Residues 79–101 traverse the membrane as a helical segment; the sequence is LFLACFVLVLTQSSIFSLLAVAV. The Cytoplasmic portion of the chain corresponds to 102-121; the sequence is DRYLAIRVPLRYKGLVTGTR. The helical transmembrane segment at 122–144 threads the bilayer; it reads ARGIIAVLWVLAFGIGLTPFLGW. Residues 145 to 178 lie on the Extracellular side of the membrane; that stretch reads NSKDSATSNCTELGDGIANKSCCPVTCLFENVVP. 2 N-linked (GlcNAc...) asparagine glycosylation sites follow: Asn153 and Asn163. Glu174 contributes to the adenosine binding site. A helical membrane pass occupies residues 179 to 203; sequence MSYMVYFNFFGCVLPPLLIMLVIYI. At 204 to 235 the chain is on the cytoplasmic side; that stretch reads KIFMVACKQLQRMELMDHSRTTLQREIHAAKS. A helical membrane pass occupies residues 236–259; it reads LAMIVGIFALCWLPVHAINCITLF. Adenosine is bound at residue Asn254. Over 260-267 the chain is Extracellular; it reads HPALAKDK. Residues 268-291 form a helical membrane-spanning segment; it reads PKWVMNVAILLSHANSVVNPIVYA. Adenosine-binding residues include Ser279 and His280. Topologically, residues 292–332 are cytoplasmic; that stretch reads YRNRDFRYSFHKIISRYVLCQAETKGGSGQAGAQSTLSLGL. A lipid anchor (S-palmitoyl cysteine) is attached at Cys311.

Belongs to the G-protein coupled receptor 1 family.

Its subcellular location is the cell membrane. Its function is as follows. Receptor for adenosine. The activity of this receptor is mediated by G proteins which activate adenylyl cyclase. In Mus musculus (Mouse), this protein is Adenosine receptor A2b (Adora2b).